We begin with the raw amino-acid sequence, 458 residues long: Biphenyl dioxygenase subunit alpha (458 aa).

Residues 58-156 enclose the Rieske domain; that stretch reads WLLLGHESHV…KEGDCGFDKA (99 aa). 4 residues coordinate [2Fe-2S] cluster: cysteine 100, histidine 102, cysteine 120, and histidine 123. Residues histidine 233 and histidine 239 each contribute to the Fe cation site.

This sequence belongs to the bacterial ring-hydroxylating dioxygenase alpha subunit family. As to quaternary structure, heterohexamer consisting of three BphA subunits and three BphE subunits. A ferredoxin (BphF) and a ferredoxin reductase (BphG) must be present to obtain activity. The cofactor is [2Fe-2S] cluster. It depends on Fe cation as a cofactor.

It catalyses the reaction biphenyl + NADH + O2 + H(+) = (2R,3S)-3-phenylcyclohexa-3,5-diene-1,2-diol + NAD(+). The protein operates within xenobiotic degradation; biphenyl degradation; 2-hydroxy-2,4-pentadienoate and benzoate from biphenyl: step 1/4. The sequence is that of Biphenyl dioxygenase subunit alpha (bphA) from Metapseudomonas furukawaii (Pseudomonas furukawaii).